Consider the following 132-residue polypeptide: D-ribose pyranase (132 aa).

Residue His-20 is the Proton donor of the active site. Substrate is bound by residues Asp-28, His-99, and 121–123; that span reads YSN.

Belongs to the RbsD / FucU family. RbsD subfamily. Homodecamer.

The protein localises to the cytoplasm. It catalyses the reaction beta-D-ribopyranose = beta-D-ribofuranose. It participates in carbohydrate metabolism; D-ribose degradation; D-ribose 5-phosphate from beta-D-ribopyranose: step 1/2. Functionally, catalyzes the interconversion of beta-pyran and beta-furan forms of D-ribose. This is D-ribose pyranase from Lactococcus lactis subsp. cremoris (strain MG1363).